The primary structure comprises 81 residues: Photosystem I iron-sulfur center (81 aa).

2 consecutive 4Fe-4S ferredoxin-type domains span residues 2 to 31 (SHSV…MIPW) and 39 to 68 (IASA…VRVY). Residues cysteine 11, cysteine 14, cysteine 17, cysteine 21, cysteine 48, cysteine 51, cysteine 54, and cysteine 58 each coordinate [4Fe-4S] cluster.

The eukaryotic PSI reaction center is composed of at least 11 subunits. The cofactor is [4Fe-4S] cluster.

The protein resides in the plastid. Its subcellular location is the chloroplast thylakoid membrane. The catalysed reaction is reduced [plastocyanin] + hnu + oxidized [2Fe-2S]-[ferredoxin] = oxidized [plastocyanin] + reduced [2Fe-2S]-[ferredoxin]. Its function is as follows. Apoprotein for the two 4Fe-4S centers FA and FB of photosystem I (PSI); essential for photochemical activity. FB is the terminal electron acceptor of PSI, donating electrons to ferredoxin. The C-terminus interacts with PsaA/B/D and helps assemble the protein into the PSI complex. Required for binding of PsaD and PsaE to PSI. PSI is a plastocyanin-ferredoxin oxidoreductase, converting photonic excitation into a charge separation, which transfers an electron from the donor P700 chlorophyll pair to the spectroscopically characterized acceptors A0, A1, FX, FA and FB in turn. In Triticum aestivum (Wheat), this protein is Photosystem I iron-sulfur center.